A 281-amino-acid chain; its full sequence is 4-diphosphocytidyl-2-C-methyl-D-erythritol kinase (281 aa).

Lys11 is an active-site residue. Pro95–Ser105 provides a ligand contact to ATP. Residue Asp137 is part of the active site.

This sequence belongs to the GHMP kinase family. IspE subfamily.

It catalyses the reaction 4-CDP-2-C-methyl-D-erythritol + ATP = 4-CDP-2-C-methyl-D-erythritol 2-phosphate + ADP + H(+). It functions in the pathway isoprenoid biosynthesis; isopentenyl diphosphate biosynthesis via DXP pathway; isopentenyl diphosphate from 1-deoxy-D-xylulose 5-phosphate: step 3/6. Catalyzes the phosphorylation of the position 2 hydroxy group of 4-diphosphocytidyl-2C-methyl-D-erythritol. The protein is 4-diphosphocytidyl-2-C-methyl-D-erythritol kinase of Geobacter metallireducens (strain ATCC 53774 / DSM 7210 / GS-15).